A 268-amino-acid polypeptide reads, in one-letter code: Testis-specific serine/threonine-protein kinase 3 (268 aa).

The 256-residue stretch at 10–265 folds into the Protein kinase domain; the sequence is YQLGKTIGEG…IEEVSWHPWL (256 aa). ATP-binding positions include 16–24 and K39; that span reads IGEGTYSKV. Catalysis depends on D134, which acts as the Proton acceptor. Phosphoserine is present on S166. At T168 the chain carries Phosphothreonine.

The protein belongs to the protein kinase superfamily. CAMK Ser/Thr protein kinase family. Requires Mg(2+) as cofactor. Mn(2+) serves as cofactor. Post-translationally, autophosphorylated at Ser-166. Phosphorylation at Thr-168 by PDPK1 activates the serine/threonine protein kinase activity.

The protein localises to the cell projection. The protein resides in the cilium. It is found in the flagellum. It catalyses the reaction L-seryl-[protein] + ATP = O-phospho-L-seryl-[protein] + ADP + H(+). It carries out the reaction L-threonyl-[protein] + ATP = O-phospho-L-threonyl-[protein] + ADP + H(+). With respect to regulation, activated by phosphorylation on Thr-168 by PDPK1. In terms of biological role, serine/threonine protein kinase required for spermatid development and male fertility. In Homo sapiens (Human), this protein is Testis-specific serine/threonine-protein kinase 3.